Reading from the N-terminus, the 24-residue chain is Coenzyme PQQ synthesis protein A (24 aa).

Positions Glu-16–Tyr-20 form a cross-link, pyrroloquinoline quinone (Glu-Tyr).

The protein belongs to the PqqA family.

It functions in the pathway cofactor biosynthesis; pyrroloquinoline quinone biosynthesis. In terms of biological role, required for coenzyme pyrroloquinoline quinone (PQQ) biosynthesis. PQQ is probably formed by cross-linking a specific glutamate to a specific tyrosine residue and excising these residues from the peptide. The polypeptide is Coenzyme PQQ synthesis protein A (Acinetobacter baumannii (strain SDF)).